The sequence spans 656 residues: DNA ligase (656 aa).

NAD(+) contacts are provided by residues 32–36 (DEEYD), 81–82 (SM), and glutamate 112. Catalysis depends on lysine 114, which acts as the N6-AMP-lysine intermediate. The NAD(+) site is built by arginine 135, glutamate 169, lysine 284, and lysine 308. Zn(2+) contacts are provided by cysteine 402, cysteine 405, cysteine 418, and cysteine 423. The 80-residue stretch at 577–656 (VQKTPFTGKT…DMWKMLKEGK (80 aa)) folds into the BRCT domain.

Belongs to the NAD-dependent DNA ligase family. LigA subfamily. Mg(2+) serves as cofactor. Requires Mn(2+) as cofactor.

It catalyses the reaction NAD(+) + (deoxyribonucleotide)n-3'-hydroxyl + 5'-phospho-(deoxyribonucleotide)m = (deoxyribonucleotide)n+m + AMP + beta-nicotinamide D-nucleotide.. DNA ligase that catalyzes the formation of phosphodiester linkages between 5'-phosphoryl and 3'-hydroxyl groups in double-stranded DNA using NAD as a coenzyme and as the energy source for the reaction. It is essential for DNA replication and repair of damaged DNA. This Nautilia profundicola (strain ATCC BAA-1463 / DSM 18972 / AmH) protein is DNA ligase.